A 189-amino-acid polypeptide reads, in one-letter code: Small ribosomal subunit protein uS4 (189 aa).

The region spanning 107–181 (RRLQTQVFKL…VKRRTLRKGD (75 aa)) is the S4 RNA-binding domain. Residues 161–189 (QSPYGGGRPGRVKRRTLRKGDGAGGDDEE) are disordered.

It belongs to the universal ribosomal protein uS4 family. As to quaternary structure, component of the small ribosomal subunit. Part of the small subunit (SSU) processome, composed of more than 70 proteins and the RNA chaperone small nucleolar RNA (snoRNA) U3.

It is found in the cytoplasm. Its subcellular location is the nucleus. It localises to the nucleolus. Its function is as follows. Component of the small ribosomal subunit. The ribosome is a large ribonucleoprotein complex responsible for the synthesis of proteins in the cell. Part of the small subunit (SSU) processome, first precursor of the small eukaryotic ribosomal subunit. During the assembly of the SSU processome in the nucleolus, many ribosome biogenesis factors, an RNA chaperone and ribosomal proteins associate with the nascent pre-rRNA and work in concert to generate RNA folding, modifications, rearrangements and cleavage as well as targeted degradation of pre-ribosomal RNA by the RNA exosome. The chain is Small ribosomal subunit protein uS4 (rps-9) from Caenorhabditis elegans.